A 291-amino-acid polypeptide reads, in one-letter code: Lactoylglutathione lyase (291 aa).

VOC domains are found at residues 24 to 149 (RLLH…LIQR) and 155 to 283 (PLCQ…LVDN). Substrate-binding residues include arginine 31, asparagine 82, and histidine 96. Residue histidine 96 is part of the active site. Residue glutamate 145 is the Proton donor/acceptor of the active site. Residue glutamate 145 participates in Ni(2+) binding. Residues glutamine 158 and glutamate 209 contribute to the active site. Glutamate 209 is a binding site for Ni(2+).

This sequence belongs to the glyoxalase I family. In terms of assembly, monomer. Requires Ni(2+) as cofactor. Phosphorylated after gibberellin treatment. In terms of tissue distribution, expressed in callus, stem, leaves, panicles and maturing seeds (at protein level).

The enzyme catalyses (R)-S-lactoylglutathione = methylglyoxal + glutathione. Its pathway is secondary metabolite metabolism; methylglyoxal degradation; (R)-lactate from methylglyoxal: step 1/2. Its function is as follows. Catalyzes the conversion of hemimercaptal, formed from methylglyoxal and glutathione, to S-lactoylglutathione. Involved in the detoxifiation of methylglyoxal. Can functionally complement growth defect of a yeast mutant lacking GLY I. Involved in abiotic stress response. Over-expression of GLYI-11 in tobacco increases tolerance to osmotic, oxidative and salt stresses. This is Lactoylglutathione lyase from Oryza sativa subsp. japonica (Rice).